Consider the following 570-residue polypeptide: Periplasmic trehalase (570 aa).

An N-terminal signal peptide occupies residues 1 to 34 (MITPALRHSGTLSFAIKLTVASTLLTFASLSAHA). Substrate is bound by residues arginine 157, 164 to 165 (WD), asparagine 201, 210 to 212 (RSQ), 282 to 284 (RPE), and glycine 315. Catalysis depends on proton donor/acceptor residues aspartate 317 and glutamate 501. A substrate-binding site is contributed by glutamate 516. The tract at residues 542–570 (KPCDSVPATRPAAPGASQPAPQKQVETTP) is disordered. Low complexity predominate over residues 552–570 (PAAPGASQPAPQKQVETTP).

It belongs to the glycosyl hydrolase 37 family. As to quaternary structure, monomer.

It localises to the periplasm. It catalyses the reaction alpha,alpha-trehalose + H2O = alpha-D-glucose + beta-D-glucose. Provides the cells with the ability to utilize trehalose at high osmolarity by splitting it into glucose molecules that can subsequently be taken up by the phosphotransferase-mediated uptake system. This chain is Periplasmic trehalase, found in Citrobacter koseri (strain ATCC BAA-895 / CDC 4225-83 / SGSC4696).